A 141-amino-acid chain; its full sequence is Mitochondrial import inner membrane translocase subunit tim16 (141 aa).

Positions 59 to 117 are J-like; the sequence is EACKILNVNKPADGTAANMEEVMERFKRLFDANDPEKGGSFYLQSKVVRARERLEAEIK. A disordered region spans residues 119–141; sequence KMEEKQAEEEVKEGWNPKIYKDR.

This sequence belongs to the TIM16/PAM16 family. In terms of assembly, heterodimer with tim14/pam18. Component of the PAM complex, at least composed of hsp70-5/ssc1, grpe/mge1, tim44, un-4/pam16, pam17 and tim14/pam18.

The protein resides in the mitochondrion inner membrane. Essential component of the PAM complex, a complex required for the translocation of transit peptide-containing proteins from the inner membrane into the mitochondrial matrix in an ATP-dependent manner. In the complex, it is required to regulate activity of mtHSP70 (hsp70-5) via its interaction with tim14/pam18. May act by positioning tim14/pam18 in juxtaposition to mtHSP70 at the translocon to maximize ATPase stimulation. The sequence is that of Mitochondrial import inner membrane translocase subunit tim16 (un-4) from Neurospora crassa (strain ATCC 24698 / 74-OR23-1A / CBS 708.71 / DSM 1257 / FGSC 987).